An 862-amino-acid chain; its full sequence is Valine--tRNA ligase (862 aa).

The 'HIGH' region signature appears at 44–53 (NVTGSLHMGH). Residues Cys176, Cys179, Cys344, Cys347, Cys417, Cys420, Cys438, and Cys441 each coordinate Zn(2+). A 'KMSKS' region motif is present at residues 528-532 (KMSKS). Position 531 (Lys531) interacts with ATP. Residues 802–862 (RRRQEKRLKE…RIREALSQIG (61 aa)) adopt a coiled-coil conformation.

Belongs to the class-I aminoacyl-tRNA synthetase family. ValS type 1 subfamily. Monomer. The cofactor is Zn(2+).

The protein resides in the cytoplasm. The enzyme catalyses tRNA(Val) + L-valine + ATP = L-valyl-tRNA(Val) + AMP + diphosphate. In terms of biological role, catalyzes the attachment of valine to tRNA(Val). As ValRS can inadvertently accommodate and process structurally similar amino acids such as threonine, to avoid such errors, it has a 'posttransfer' editing activity that hydrolyzes mischarged Thr-tRNA(Val) in a tRNA-dependent manner. In Thermus thermophilus (strain ATCC 27634 / DSM 579 / HB8), this protein is Valine--tRNA ligase.